Consider the following 601-residue polypeptide: Putative pentatricopeptide repeat-containing protein At3g25060, mitochondrial (601 aa).

The N-terminal 80 residues, 1 to 80 (MVQTKHFCML…KVFDELPQRG (80 aa)), are a transit peptide targeting the mitochondrion. PPR repeat units lie at residues 49 to 79 (GSSI…LPQR), 80 to 114 (GVSV…KIQP), 115 to 149 (DSST…GYKN), 150 to 180 (DVFV…MAKR), 181 to 215 (DVIC…GFGR), 216 to 250 (DRVV…GLPM), 251 to 281 (NVVV…MMFK), 282 to 316 (TAVS…GFQP), 317 to 347 (DLVT…ILKR), 351 to 381 (DRVT…VGRK), 382 to 416 (DLVC…NIEP), 417 to 452 (DHAT…KIQP), and 453 to 487 (SEKH…NALP). Positions 488–563 (IWVALLSGCI…VPGYSAIEVN (76 aa)) are type E motif. Residues 564–594 (GELRTFLMEDLSHHEHYHMLQVLRNLKTEIR) form a type E(+) motif region.

Belongs to the PPR family. PCMP-E subfamily.

Its subcellular location is the mitochondrion. The polypeptide is Putative pentatricopeptide repeat-containing protein At3g25060, mitochondrial (PCMP-E96) (Arabidopsis thaliana (Mouse-ear cress)).